The primary structure comprises 615 residues: Nuclear receptor subfamily 1 group D member 1 (615 aa).

Over residues 1–12 (MTTLDSNNNTGG) the composition is skewed to polar residues. The tract at residues 1 to 70 (MTTLDSNNNT…TQDPARSFGS (70 aa)) is required for phosphorylation by CSNK1E and cytoplasmic localization. A disordered region spans residues 1-120 (MTTLDSNNNT…SSRVSPSKGT (120 aa)). The tract at residues 1–129 (MTTLDSNNNT…TSNITKLNGM (129 aa)) is modulating. Low complexity predominate over residues 14-34 (ITYIGSSGSSPSRTSPESLYS). The span at 35 to 48 (DSSNGSFQSLTQGC) shows a compositional bias: polar residues. The segment at 49–285 (PTYFPPSPTG…PPRSPSPEPT (237 aa)) is crucial for activation of GJA1. Residues serine 55 and serine 59 each carry the phosphoserine; by GSK3-beta modification. A compositionally biased stretch (low complexity) spans 70 to 94 (SAPPSLSDDSSPSSASSSSSSSSSS). Residues 130–206 (VLLCKVCGDV…VGMSRDAVRF (77 aa)) constitute a DNA-binding region (nuclear receptor). 2 NR C4-type zinc fingers span residues 133–153 (CKVCGDVASGFHYGVHACEGC) and 170–194 (CLKNENCSIVRINRNRCQQCRFKKC). An N6-acetyllysine; by KAT5 mark is found at lysine 192 and lysine 193. Disordered regions lie at residues 235-286 (LCPL…EPTM) and 312-337 (PGNFNANHASGSPSATTPHRWESQGC). Low complexity predominate over residues 240-252 (TSPTPHPTSGSMG). Over residues 253–262 (PSPPPAPAPT) the composition is skewed to pro residues. A Phosphothreonine; by CDK1 modification is found at threonine 275. The 331-residue stretch at 285–615 (TMEDVISQVA…KLLSFRVDAQ (331 aa)) folds into the NR LBD domain. The span at 312–328 (PGNFNANHASGSPSATT) shows a compositional bias: polar residues. Cysteine 419 contacts heme. Lysine 592 is subject to N6-acetyllysine. Histidine 603 contacts heme.

The protein belongs to the nuclear hormone receptor family. NR1 subfamily. In terms of assembly, binds DNA as a monomer or a homodimer. Interacts with NR2E3 and ZNHIT1. Interacts with C1D. Interacts with SP1. Interacts with OPHN1 (via C-terminus). Interacts with PER2; the interaction associates PER2 to BMAL1 promoter region. Interacts with CRY1. Interacts with CCAR2. Interacts with SIAH2. Interacts with FBXW7 and CDK1. Interacts with HUWE1. Interacts with NR0B2. Interacts with NFIL3. Interacts (via domain NR LBD) with HSP90AA1 and HSP90AB1. In terms of processing, ubiquitinated, leading to its proteasomal degradation. Ubiquitinated by the SCF(FBXW7) complex when phosphorylated by CDK1 leading to its proteasomal degradation. Ubiquitinated by SIAH2; leading to its proteasomal degradation. Rapidly ubiquitinated in response to inflammatory triggers and sumoylation is a prerequisite to its ubiquitination. Sumoylated by UBE2I, desumoylated by SENP1, and sumoylation is a prerequisite to its ubiquitination. Post-translationally, phosphorylated by CSNK1E; phosphorylation enhances its cytoplasmic localization. In terms of processing, undergoes lysosome-mediated degradation in a time-dependent manner in the liver. Expressed during adipocyte differentiation (at protein level). Expressed in skeletal muscle, bladder, lumbar spinal cord, pancreatic islets and hypothalamus. Expressed in developing and adult retina. In the adult retina, predominantly expressed in the outer nuclear layer, where rod and cone cells reside, and also localized to the ganglion cell layer. Expressed in a circadian manner in the liver. Expressed in a circadian manner in the lung with a peak between ZT8 and ZT12.

It localises to the nucleus. It is found in the cytoplasm. Its subcellular location is the cell projection. The protein localises to the dendrite. The protein resides in the dendritic spine. Its function is as follows. Transcriptional repressor which coordinates circadian rhythm and metabolic pathways in a heme-dependent manner. Integral component of the complex transcription machinery that governs circadian rhythmicity and forms a critical negative limb of the circadian clock by directly repressing the expression of core clock components BMAL1, CLOCK and CRY1. Also regulates genes involved in metabolic functions, including lipid and bile acid metabolism, adipogenesis, gluconeogenesis and the macrophage inflammatory response. Acts as a receptor for heme which stimulates its interaction with the NCOR1/HDAC3 corepressor complex, enhancing transcriptional repression. Recognizes two classes of DNA response elements within the promoter of its target genes and can bind to DNA as either monomers or homodimers, depending on the nature of the response element. Binds as a monomer to a response element composed of the consensus half-site motif 5'-[A/G]GGTCA-3' preceded by an A/T-rich 5' sequence (RevRE), or as a homodimer to a direct repeat of the core motif spaced by two nucleotides (RevDR-2). Acts as a potent competitive repressor of ROR alpha (RORA) function and regulates the levels of its ligand heme by repressing the expression of PPARGC1A, a potent inducer of heme synthesis. Regulates lipid metabolism by repressing the expression of APOC3 and by influencing the activity of sterol response element binding proteins (SREBPs); represses INSIG2 which interferes with the proteolytic activation of SREBPs which in turn govern the rhythmic expression of enzymes with key functions in sterol and fatty acid synthesis. Regulates gluconeogenesis via repression of G6PC1 and PEPCK and adipocyte differentiation via repression of PPARG. Regulates glucagon release in pancreatic alpha-cells via the AMPK-NAMPT-SIRT1 pathway and the proliferation, glucose-induced insulin secretion and expression of key lipogenic genes in pancreatic-beta cells. Positively regulates bile acid synthesis by increasing hepatic expression of CYP7A1 via repression of NR0B2 and NFIL3 which are negative regulators of CYP7A1. Modulates skeletal muscle oxidative capacity by regulating mitochondrial biogenesis and autophagy; controls mitochondrial biogenesis and respiration by interfering with the STK11-PRKAA1/2-SIRT1-PPARGC1A signaling pathway. Represses the expression of SERPINE1/PAI1, an important modulator of cardiovascular disease and the expression of inflammatory cytokines and chemokines in macrophages. Represses gene expression at a distance in macrophages by inhibiting the transcription of enhancer-derived RNAs (eRNAs). Plays a role in the circadian regulation of body temperature and negatively regulates thermogenic transcriptional programs in brown adipose tissue (BAT); imposes a circadian oscillation in BAT activity, increasing body temperature when awake and depressing thermogenesis during sleep. In concert with NR2E3, regulates transcriptional networks critical for photoreceptor development and function. In addition to its activity as a repressor, can also act as a transcriptional activator. In the ovarian granulosa cells acts as a transcriptional activator of STAR which plays a role in steroid biosynthesis. In collaboration with SP1, activates GJA1 transcription in a heme-independent manner. Represses the transcription of CYP2B10, CYP4A10 and CYP4A14. Represses the transcription of CES2. Represses and regulates the circadian expression of TSHB in a NCOR1-dependent manner. Negatively regulates the protein stability of NR3C1 and influences the time-dependent subcellular distribution of NR3C1, thereby affecting its transcriptional regulatory activity. Plays a critical role in the circadian control of neutrophilic inflammation in the lung; under resting, non-stress conditions, acts as a rhythmic repressor to limit inflammatory activity whereas in the presence of inflammatory triggers undergoes ubiquitin-mediated degradation thereby relieving inhibition of the inflammatory response. Plays a key role in the circadian regulation of microglial activation and neuroinflammation; suppresses microglial activation through the NF-kappaB pathway in the central nervous system. Plays a role in the regulation of the diurnal rhythms of lipid and protein metabolism in the skeletal muscle via transcriptional repression of genes controlling lipid and amino acid metabolism in the muscle. This Mus musculus (Mouse) protein is Nuclear receptor subfamily 1 group D member 1 (Nr1d1).